We begin with the raw amino-acid sequence, 662 residues long: Transketolase (662 aa).

H28 is a binding site for substrate. Thiamine diphosphate is bound by residues H68 and 115-117 (GPL). Residue D156 coordinates Mg(2+). Thiamine diphosphate-binding residues include G157 and N186. 2 residues coordinate Mg(2+): N186 and I188. Substrate-binding residues include H261, R356, and S383. H261 provides a ligand contact to thiamine diphosphate. E410 serves as the catalytic Proton donor. F436 contacts thiamine diphosphate. The substrate site is built by H460, D468, and R519.

Belongs to the transketolase family. As to quaternary structure, homodimer. It depends on Mg(2+) as a cofactor. Ca(2+) serves as cofactor. Requires Mn(2+) as cofactor. Co(2+) is required as a cofactor. The cofactor is thiamine diphosphate.

It carries out the reaction D-sedoheptulose 7-phosphate + D-glyceraldehyde 3-phosphate = aldehydo-D-ribose 5-phosphate + D-xylulose 5-phosphate. The protein operates within carbohydrate biosynthesis; Calvin cycle. It functions in the pathway carbohydrate degradation; pentose phosphate pathway. Catalyzes the transfer of a two-carbon ketol group from a ketose donor to an aldose acceptor, via a covalent intermediate with the cofactor thiamine pyrophosphate. This chain is Transketolase (tkt), found in Staphylococcus epidermidis (strain ATCC 35984 / DSM 28319 / BCRC 17069 / CCUG 31568 / BM 3577 / RP62A).